The following is a 4218-amino-acid chain: Protein Obscurin (4218 aa).

An SH3 domain is found at 3–71 (AVADIVFVSR…PIDILEFNPT (69 aa)). One can recognise a DH domain in the interval 86-264 (RKLTILRELV…LSVPSRAYDN (179 aa)). Positions 439-466 (SKETKERLQHEQQELLKLEQEAIELYKK) form a coiled coil. Disordered regions lie at residues 465 to 592 (KKQQ…SHSK), 684 to 703 (SLRDGDTAPAGGSPGRQQGY), 728 to 750 (SGANQHLQQSGPPPPPIPPNFTR), and 923 to 1010 (RYET…EDRP). 2 stretches are compositionally biased toward low complexity: residues 466 to 490 (KQQSSKSVSSKTESVEITSSQVKSS) and 505 to 517 (AQVKEVTPVKVVS). Over residues 578–592 (KEVRKEVPPSASHSK) the composition is skewed to basic and acidic residues. Positions 923-935 (RYETKTRDYDRGT) are enriched in basic and acidic residues. Polar residues predominate over residues 936–948 (SYDSTVERSQYGI). Basic and acidic residues-rich tracts occupy residues 950 to 962 (SRRDRSSVDKVEA) and 972 to 986 (TESRAASRAESRAES). The span at 987 to 996 (RASYSVAESR) shows a compositional bias: low complexity. Ig-like C2-type domains are found at residues 1017–1103 (PVVV…TTVS), 1152–1298 (PRVK…AELS), 1313–1400 (PTLV…SSIN), 1504–1594 (PVIV…TQLL), 1599–1689 (PEFT…CVVT), 1694–1785 (PKVK…CKVA), 1815–1906 (PEIV…LSLS), 2018–2107 (PEIS…FNLA), 2113–2214 (PTFI…FKLA), 2220–2305 (PSFV…EKVA), 2318–2409 (PKFL…VEIV), 2415–2505 (PVFV…AKLY), 2519–2609 (PQFV…ANVR), 2614–2698 (PPVF…KDIT), and 2716–2792 (PPVF…SCRI). The cysteines at positions 1199 and 1282 are disulfide-linked. Cys-2739 and Cys-2790 form a disulfide bridge. In terms of domain architecture, Fibronectin type-III 1 spans 2832–2933 (APPPLSEGPI…TYRQKLVPDP (102 aa)). The Protein kinase 1 domain maps to 3186–3440 (YDIGDELGRG…VKTALKHPWF (255 aa)). Gly-3198, Lys-3215, Glu-3260, Ala-3262, Glu-3266, Lys-3310, and Asp-3326 together coordinate ATP. The Ig-like C2-type 16 domain maps to 3654 to 3738 (PFFREKPQTI…ARNKVGQTVA (85 aa)). Positions 3750-3843 (APDSPEISAN…IPVSASTVGG (94 aa)) constitute a Fibronectin type-III 2 domain. A Protein kinase 2 domain is found at 3897–4151 (YSFISEIARG…TEDCLEHRWL (255 aa)).

It belongs to the protein kinase superfamily. CAMK Ser/Thr protein kinase family. As to quaternary structure, interacts with myosin. May interact (via protein kinase domain 1) with ball. May interact (via protein kinase domain 1 or 2) with mask. May interact (via protein kinase domain 2) with Tm1/tropomyosin-1. In terms of tissue distribution, expressed in the thoracic muscles including the indirect flight muscles (IFM) (at protein level).

The protein localises to the cytoplasm. The protein resides in the myofibril. Its subcellular location is the sarcomere. It localises to the m line. Functionally, structural component of the muscle M line which is involved in assembly and organization of sarcomere. Required for the development and organization of indirect flight muscle sarcomeres by regulating the formation of M line and H zone and the correct assembly of thick and thin filaments in the sarcomere. Lacks serine/threonine-protein kinase activity. The sequence is that of Protein Obscurin from Drosophila melanogaster (Fruit fly).